A 188-amino-acid chain; its full sequence is ATP synthase subunit b (188 aa).

Residues 19 to 39 (VYVLGATIVSFLVLFLFITYF) form a helical membrane-spanning segment.

It belongs to the ATPase B chain family. F-type ATPases have 2 components, F(1) - the catalytic core - and F(0) - the membrane proton channel. F(1) has five subunits: alpha(3), beta(3), gamma(1), delta(1), epsilon(1). F(0) has three main subunits: a(1), b(2) and c(10-14). The alpha and beta chains form an alternating ring which encloses part of the gamma chain. F(1) is attached to F(0) by a central stalk formed by the gamma and epsilon chains, while a peripheral stalk is formed by the delta and b chains.

The protein localises to the cell membrane. Functionally, f(1)F(0) ATP synthase produces ATP from ADP in the presence of a proton or sodium gradient. F-type ATPases consist of two structural domains, F(1) containing the extramembraneous catalytic core and F(0) containing the membrane proton channel, linked together by a central stalk and a peripheral stalk. During catalysis, ATP synthesis in the catalytic domain of F(1) is coupled via a rotary mechanism of the central stalk subunits to proton translocation. Component of the F(0) channel, it forms part of the peripheral stalk, linking F(1) to F(0). In Mesomycoplasma hyopneumoniae (strain 7448) (Mycoplasma hyopneumoniae), this protein is ATP synthase subunit b.